The primary structure comprises 566 residues: Unconventional myosin-VIIa (566 aa).

The Myosin motor domain occupies 67–566; the sequence is MMEDMIQHLG…AGVVYYESQG (500 aa). 160–167 serves as a coordination point for ATP; it reads GESGAGKT.

This sequence belongs to the TRAFAC class myosin-kinesin ATPase superfamily. Myosin family. In terms of assembly, might homodimerize in a two headed molecule through the formation of a coiled-coil rod. Identified in a complex with USH1C and USH1G. Interacts with MYRIP. Interacts with RPE65. Interacts with CIB2. May interact with CALM. Interacts with WHRN. Interacts with PLEKHB1 (via PH domain). Interacts with PCDH15. Interacts with TWF2. Interacts with USH1G. Interacts with MYH9. Interacts (via MyTH4-FERM domains) with cytoplasmic regions of ADGRV1 and USH2A. Interacts with PDZD7 (via MyTH4-FERM domains). Interacts with CALML4.

Its subcellular location is the cytoplasm. It localises to the cell cortex. It is found in the cytoskeleton. The protein resides in the synapse. Its function is as follows. Myosins are actin-based motor molecules with ATPase activity. Unconventional myosins serve in intracellular movements. Their highly divergent tails bind to membranous compartments, which are then moved relative to actin filaments. In the retina, plays an important role in the renewal of the outer photoreceptor disks. Plays an important role in the distribution and migration of retinal pigment epithelial (RPE) melanosomes and phagosomes, and in the regulation of opsin transport in retinal photoreceptors. In the inner ear, plays an important role in differentiation, morphogenesis and organization of cochlear hair cell bundles. Motor protein that is a part of the functional network formed by USH1C, USH1G, CDH23 and MYO7A that mediates mechanotransduction in cochlear hair cells. Required for normal hearing. Involved in hair-cell vesicle trafficking of aminoglycosides, which are known to induce ototoxicity. This is Unconventional myosin-VIIa (MYO7A) from Sus scrofa (Pig).